Consider the following 282-residue polypeptide: Large ribosomal subunit protein uL2 (282 aa).

The segment at 230–282 (AMNPIDHPLGGGEGRSSGGRHPVSPWGMPAKGYKTRDKKKASSRLIVKRRGQK) is disordered. The segment covering 265-282 (RDKKKASSRLIVKRRGQK) has biased composition (basic residues).

Belongs to the universal ribosomal protein uL2 family. Part of the 50S ribosomal subunit. Forms a bridge to the 30S subunit in the 70S ribosome.

Functionally, one of the primary rRNA binding proteins. Required for association of the 30S and 50S subunits to form the 70S ribosome, for tRNA binding and peptide bond formation. It has been suggested to have peptidyltransferase activity; this is somewhat controversial. Makes several contacts with the 16S rRNA in the 70S ribosome. The polypeptide is Large ribosomal subunit protein uL2 (Desulfovibrio desulfuricans (strain ATCC 27774 / DSM 6949 / MB)).